Here is a 118-residue protein sequence, read N- to C-terminus: MSQVAKDQKEQQIPSTVHRIRITLTSRNVRNLEKVCSDLVNRAKDKQLRVKGPVRLPTKILKITTRKTPNGEGSKTWETYEMRIHKRLIDLHSPSEIVKQITSIHIEPGVEVEVTIAQ.

Phosphoserine is present on Ser37.

The protein belongs to the universal ribosomal protein uS10 family. In terms of assembly, component of the small ribosomal subunit (SSU). Mature yeast ribosomes consist of a small (40S) and a large (60S) subunit. The 40S small subunit contains 1 molecule of ribosomal RNA (18S rRNA) and at least 33 different proteins. The large 60S subunit contains 3 rRNA molecules (25S, 5.8S and 5S rRNA) and at least 46 different proteins.

Its subcellular location is the cytoplasm. In terms of biological role, component of the ribosome, a large ribonucleoprotein complex responsible for the synthesis of proteins in the cell. The small ribosomal subunit (SSU) binds messenger RNAs (mRNAs) and translates the encoded message by selecting cognate aminoacyl-transfer RNA (tRNA) molecules. The large subunit (LSU) contains the ribosomal catalytic site termed the peptidyl transferase center (PTC), which catalyzes the formation of peptide bonds, thereby polymerizing the amino acids delivered by tRNAs into a polypeptide chain. The nascent polypeptides leave the ribosome through a tunnel in the LSU and interact with protein factors that function in enzymatic processing, targeting, and the membrane insertion of nascent chains at the exit of the ribosomal tunnel. The chain is Small ribosomal subunit protein uS10 (rps20) from Schizosaccharomyces pombe (strain 972 / ATCC 24843) (Fission yeast).